The chain runs to 43 residues: Defensin-A (43 aa).

3 cysteine pairs are disulfide-bonded: C3-C34, C20-C39, and C24-C41.

The protein localises to the secreted. Its function is as follows. Antibacterial protein. Strong activity against the Gram-positive bacteria M.luteus, B.megaterium and S.aureus. Reduced activity against Gram-positive bacterium B.subtilis and weak activity against Gram-negative bacterium X.japonicus. No detectable activity against the Gram-negative bacteria E.asbriae, E.coli, P.aeruginosa and S.marcescens. The protein is Defensin-A of Anomala cuprea (Cupreous chafer beetle).